Reading from the N-terminus, the 319-residue chain is uncharacterized protein (319 aa).

Low complexity predominate over residues 268–312; that stretch reads SSVVAVTHPPSTTSTTTSVSETLSSFIAPSDLSSQPSPSSHPSSP. A disordered region spans residues 268-319; the sequence is SSVVAVTHPPSTTSTTTSVSETLSSFIAPSDLSSQPSPSSHPSSPFGNHNEF.

This is an uncharacterized protein from Lepidoptera (butterflies and moths).